We begin with the raw amino-acid sequence, 31 residues long: Photosystem II reaction center protein T (31 aa).

A helical membrane pass occupies residues 3 to 23; sequence ALVYTFLLVGTLGIIFFSIFF.

Belongs to the PsbT family. In terms of assembly, PSII is composed of 1 copy each of membrane proteins PsbA, PsbB, PsbC, PsbD, PsbE, PsbF, PsbH, PsbI, PsbJ, PsbK, PsbL, PsbM, PsbT, PsbY, PsbZ, Psb30/Ycf12, at least 3 peripheral proteins of the oxygen-evolving complex and a large number of cofactors. It forms dimeric complexes.

Its subcellular location is the plastid. The protein resides in the chloroplast thylakoid membrane. In terms of biological role, found at the monomer-monomer interface of the photosystem II (PS II) dimer, plays a role in assembly and dimerization of PSII. PSII is a light-driven water plastoquinone oxidoreductase, using light energy to abstract electrons from H(2)O, generating a proton gradient subsequently used for ATP formation. The sequence is that of Photosystem II reaction center protein T from Chlamydomonas reinhardtii (Chlamydomonas smithii).